The primary structure comprises 961 residues: Zinc finger protein basonuclin-1 (961 aa).

The hydrophobic stretch occupies residues 210–219 (MTFMLPFQFF). C2H2-type zinc fingers lie at residues 325-348 (VFCT…NAVH) and 353-382 (HKCT…PRLH). The segment at 370-393 (RNRHSANPNPRLHMPMNRNNRDKD) is disordered. Positions 501 to 507 (PKKKSRK) match the Nuclear localization signal motif. 2 positions are modified to phosphoserine: Ser-505 and Ser-509. Positions 523-572 (EEKRHSLSSDDEVPLQVVSEDEPEDSSPRSDRVPEEQHTQLSLEEPLPQG) are disordered. Residues 531–547 (SDDEVPLQVVSEDEPED) show a composition bias toward acidic residues. A compositionally biased stretch (basic and acidic residues) spans 548–560 (SSPRSDRVPEEQH). C2H2-type zinc fingers lie at residues 687 to 711 (FQCD…NTHA) and 715 to 743 (HACT…SLHQ). A disordered region spans residues 810–864 (ESYNSGPPSEGTILDLSTTSSMKSESSSHSSWDSDGVSEEGTALMEDSDGNCEGQ). The segment covering 826–844 (STTSSMKSESSSHSSWDSD) has biased composition (low complexity). 2 consecutive C2H2-type zinc fingers follow at residues 895–918 (ITCH…KTVH) and 923–950 (HKCK…PNLH). Positions 937–961 (VRSRNRHSQNPNLHKSLASSPSHLQ) are disordered.

In terms of assembly, interacts with HSF2BP (via C-terminus). In terms of processing, phosphorylation on Ser-505 and Ser-509 leads to cytoplasmic localization. Epidermis and germ cells of testis and ovary.

Its subcellular location is the nucleus. The protein localises to the cytoplasm. It localises to the nucleoplasm. Its function is as follows. Transcriptional activator. It is likely involved in the regulation of keratinocytes terminal differentiation in squamous epithelia and hair follicles. Required for the maintenance of spermatogenesis. It is involved in the positive regulation of oocyte maturation, probably acting through the control of BMP15 levels and regulation of AKT signaling cascade. May also play a role in the early development of embryos. The chain is Zinc finger protein basonuclin-1 (Bnc1) from Mus musculus (Mouse).